The sequence spans 305 residues: Fumarylacetoacetate hydrolase domain-containing protein 2 homolog (305 aa).

Glutamate 141, glutamate 143, and aspartate 172 together coordinate a divalent metal cation.

It belongs to the FAH family. Ca(2+) is required as a cofactor. Requires Mg(2+) as cofactor.

In terms of biological role, may have hydrolase activity. The sequence is that of Fumarylacetoacetate hydrolase domain-containing protein 2 homolog (fahd2) from Dictyostelium discoideum (Social amoeba).